We begin with the raw amino-acid sequence, 139 residues long: Histone H3 (139 aa).

A disordered region spans residues 1 to 48 (MARTKSTVIARKVTGGKAPRKQIGSKAARKSAAPSNTSGGVKKPHRYK). Residue Lys5 is modified to N6,N6,N6-trimethyllysine; alternate. Lys5 is modified (N6,N6-dimethyllysine; alternate). N6-methyllysine; alternate is present on residues Lys5 and Lys12. Lys12, Lys17, Lys21, Lys26, Lys30, and Lys42 each carry N6-acetyllysine; alternate. Lys17 is modified (N6,N6-dimethyllysine; alternate). 4 positions are modified to N6-methyllysine; alternate: Lys21, Lys26, Lys30, and Lys42. N6,N6,N6-trimethyllysine; alternate occurs at positions 30 and 42. 2 positions are modified to N6,N6-dimethyllysine; alternate: Lys30 and Lys42. Residues Lys62 and Lys70 each carry the N6-acetyllysine modification. Residue Lys85 is modified to N6,N6,N6-trimethyllysine; alternate. An N6,N6-dimethyllysine; alternate modification is found at Lys85. Residue Lys85 is modified to N6-methyllysine; alternate.

It belongs to the histone H3 family. In terms of assembly, the nucleosome is a histone octamer containing two molecules each of H2A, H2B, H3 and H4 assembled in one H3-H4 heterotetramer and two H2A-H2B heterodimers. The octamer wraps approximately 147 bp of DNA. Post-translationally, mono-, di- and trimethylated by the COMPASS complex to form H3K4me1/2/3. H3K4me activates gene expression by regulating transcription elongation and plays a role in telomere length maintenance. H3K4me enrichment correlates with transcription levels, and occurs in a 5' to 3' gradient with H3K4me3 enrichment at the 5'-end of genes, shifting to H3K4me2 and then H3K4me1. Methylated by SET2 to form H3K36me. H3K36me represses gene expression. Methylated by DOT1 to form H3K79me. H3K79me is required for association of SIR proteins with telomeric regions and for telomeric silencing. The COMPASS-mediated formation of H3K4me2/3 and the DOT1-mediated formation of H3K79me require H2BK123ub1. In terms of processing, acetylation of histone H3 leads to transcriptional activation. Acetylated by GCN5 to form H3K14ac. H3K14ac can also be formed by ESA1. H3K56ac formation occurs predominantly in newly synthesized H3 molecules during G1, S and G2/M of the cell cycle and may be involved in DNA repair.

The protein resides in the nucleus. The protein localises to the chromosome. Core component of nucleosome. Nucleosomes wrap and compact DNA into chromatin, limiting DNA accessibility to the cellular machineries which require DNA as a template. Histones thereby play a central role in transcription regulation, DNA repair, DNA replication and chromosomal stability. DNA accessibility is regulated via a complex set of post-translational modifications of histones, also called histone code, and nucleosome remodeling. The sequence is that of Histone H3 (HHT1) from Yarrowia lipolytica (strain CLIB 122 / E 150) (Yeast).